Consider the following 1663-residue polypeptide: Cortactin-binding protein 2 (1663 aa).

Disordered regions lie at residues 1-23 (MATDGASCEPDLSRAPEDAAGAA), 203-222 (KKKTNELEEELSTEKRRSTE), 359-440 (QASH…LHPG), 454-478 (GNANDPDQNGNTTQSPPSRDVSPTS), and 498-617 (RFTS…KPSI). A coiled-coil region spans residues 119-276 (KKMQERMSAQ…EQLKRGSDSK (158 aa)). Over residues 386–396 (PSTGSTPDPTS) the composition is skewed to low complexity. At R498 the chain carries Asymmetric dimethylarginine. The segment covering 583 to 593 (TVASPPSSLPQ) has biased composition (polar residues). 6 ANK repeats span residues 709–739 (GRPTLLQQAAAQGNVTLLSMLLNEEGLDINY), 743–772 (DGHSALYSAAKNGHTDCVRLLLSAEAQVNA), 776–805 (NGFTPLCAAAAQGHFECVELLIAYDANINH), 809–838 (GGQTPLYLACKNGNKECVKLLLEAGTNRSV), 842–871 (DGWTPVHAAVDTGNVDSLKLLMYHRIPARG), and 912–942 (EGWTAAHIAASKGFKNCLEILCRHRGLEPER). The disordered stretch occupies residues 1446-1485 (NKKKGESGAWRKVNTSPRRKSGRFSLPTWNKPDLSTEGMK). S1524 bears the Phosphoserine mark. The interval 1580 to 1663 (SQKEVSPLSS…KNEHLEKPNK (84 aa)) is disordered. The span at 1582 to 1599 (KEVSPLSSHQTTECSNSK) shows a compositional bias: polar residues. Residues 1624 to 1638 (SQNTKRSSSSSNTRQ) show a composition bias toward low complexity. Residues 1645 to 1663 (SKEENWNLHKNEHLEKPNK) are compositionally biased toward basic and acidic residues.

In terms of assembly, interacts with CTTN/cortactin SH3 domain. Interacts with STRN, STRN4/zinedin and MOB4/phocein; this interactions mediate the association with the STRIPAK core complex and may regulate dendritic spine distribution of the STRIPAK complex in hippocampal neurons. Activation of glutamate receptors weakens the interaction with STRN and STRN4.

The protein resides in the cytoplasm. It localises to the cell cortex. It is found in the cell projection. Its subcellular location is the dendritic spine. Functionally, regulates the dendritic spine distribution of CTTN/cortactin in hippocampal neurons, and thus controls dendritic spinogenesis and dendritic spine maintenance. Associates with the striatin-interacting phosphatase and kinase (STRIPAK) core complex to regulate dendritic spine distribution of the STRIPAK complex in hippocampal neurons. In Pongo abelii (Sumatran orangutan), this protein is Cortactin-binding protein 2 (CTTNBP2).